The primary structure comprises 394 residues: Candidapepsin (394 aa).

A signal peptide spans 1–23; the sequence is MATIFLFTKNVFIALAFALFAQG. The propeptide at 24-60 is activation peptide; sequence LTIPDGIEKRTDKVVSLDFTVIRKPFNATAHRLIQKR. A glycan (N-linked (GlcNAc...) asparagine) is linked at N50. A Peptidase A1 domain is found at 74–381; it reads YAADIVVGSN…DLDDKTISLA (308 aa). D92 is an active-site residue. A disulfide bridge links C107 with C119. The active site involves D278. A disulfide bond links C314 and C347.

It belongs to the peptidase A1 family. Post-translationally, O-glycosylated.

Its subcellular location is the secreted. It carries out the reaction Preferential cleavage at the carboxyl of hydrophobic amino acids, but fails to cleave 15-Leu-|-Tyr-16, 16-Tyr-|-Leu-17 and 24-Phe-|-Phe-25 of insulin B chain. Activates trypsinogen, and degrades keratin.. The chain is Candidapepsin (SAPT1) from Candida tropicalis (Yeast).